The sequence spans 367 residues: DNA replication and repair protein RecF (367 aa).

30 to 37 (GANGSGKT) contacts ATP.

It belongs to the RecF family.

The protein localises to the cytoplasm. Functionally, the RecF protein is involved in DNA metabolism; it is required for DNA replication and normal SOS inducibility. RecF binds preferentially to single-stranded, linear DNA. It also seems to bind ATP. This is DNA replication and repair protein RecF from Pseudomonas syringae pv. syringae (strain B728a).